The chain runs to 283 residues: MRYIGAHVSAAGGVSNAPINAAKIGANAFALFTKNQRQWSAKELSEGEIEQFKANLKASGISADHVLPHASYLINLGHPEKEARAKSLEAFIDEIERASKLGLKLLNFHPGSHLKQISQNECLDNIARCINEALKRTSGVKLVIENTAAQGSNLGFDFAQLAYLIERVDDESRVGVCIDTCHAFAAGYDLRSKEAYAKTMGEFDAVIGYKFLSGMHLNDAKFGLGSKKDRHESLGKGELGLGAFENIINDDKIGEIPLILETIDESIWEDEIKILRNLEKEKL.

Residues histidine 69, histidine 109, glutamate 145, aspartate 179, histidine 182, histidine 216, aspartate 229, histidine 231, and glutamate 261 each contribute to the Zn(2+) site.

The protein belongs to the AP endonuclease 2 family. The cofactor is Zn(2+).

It catalyses the reaction Endonucleolytic cleavage to 5'-phosphooligonucleotide end-products.. Functionally, endonuclease IV plays a role in DNA repair. It cleaves phosphodiester bonds at apurinic or apyrimidinic (AP) sites, generating a 3'-hydroxyl group and a 5'-terminal sugar phosphate. The sequence is that of Probable endonuclease 4 from Campylobacter concisus (strain 13826).